Consider the following 243-residue polypeptide: Ribosomal RNA small subunit methyltransferase G (243 aa).

Residues Gly-79, Phe-84, 130 to 131 (AE), and Arg-150 each bind S-adenosyl-L-methionine. The interval 219-243 (EKKKQTPNKYPRKPGTPGKDPIGKK) is disordered.

This sequence belongs to the methyltransferase superfamily. RNA methyltransferase RsmG family.

It is found in the cytoplasm. In terms of biological role, specifically methylates the N7 position of a guanine in 16S rRNA. The polypeptide is Ribosomal RNA small subunit methyltransferase G (Pediococcus pentosaceus (strain ATCC 25745 / CCUG 21536 / LMG 10740 / 183-1w)).